A 223-amino-acid chain; its full sequence is Ribonuclease 3 (223 aa).

Positions 4-127 (YSQLEKRLNY…IIGAVYLEAG (124 aa)) constitute an RNase III domain. A Mg(2+)-binding site is contributed by glutamate 40. Aspartate 44 is a catalytic residue. Mg(2+) is bound by residues asparagine 113 and glutamate 116. Residue glutamate 116 is part of the active site. The region spanning 154–223 (DYKTALQELT…AKIALEALKK (70 aa)) is the DRBM domain.

This sequence belongs to the ribonuclease III family. In terms of assembly, homodimer. It depends on Mg(2+) as a cofactor.

The protein localises to the cytoplasm. It catalyses the reaction Endonucleolytic cleavage to 5'-phosphomonoester.. Functionally, digests double-stranded RNA. Involved in the processing of primary rRNA transcript to yield the immediate precursors to the large and small rRNAs (23S and 16S). Processes some mRNAs, and tRNAs when they are encoded in the rRNA operon. Processes pre-crRNA and tracrRNA of type II CRISPR loci if present in the organism. In Sulfurovum sp. (strain NBC37-1), this protein is Ribonuclease 3.